The primary structure comprises 442 residues: Cytokine receptor-like factor 3 (442 aa).

Positions 10–46 (EVLLQEARENVEAAQSYRRELGQRLQGLREAQRQIKE) form a coiled coil. The Fibronectin type-III domain maps to 181–274 (PPVQIEELIE…PQTGHSTLVP (94 aa)).

It belongs to the cytokine receptor-like factor 3 family.

The protein localises to the cytoplasm. Its function is as follows. May play a role in the negative regulation of cell cycle progression. This is Cytokine receptor-like factor 3 (Crlf3) from Mus musculus (Mouse).